Reading from the N-terminus, the 304-residue chain is Large ribosomal subunit protein uL18 (304 aa).

This sequence belongs to the universal ribosomal protein uL18 family. As to quaternary structure, component of a hexameric 5S RNP precursor complex, composed of 5S RNA, RRS1, RPF2, RPL5, RPL11 and SYO1; this complex acts as a precursor for ribosome assembly.

The protein localises to the cytoplasm. Component of the ribosome, a large ribonucleoprotein complex responsible for the synthesis of proteins in the cell. The small ribosomal subunit (SSU) binds messenger RNAs (mRNAs) and translates the encoded message by selecting cognate aminoacyl-transfer RNA (tRNA) molecules. The large subunit (LSU) contains the ribosomal catalytic site termed the peptidyl transferase center (PTC), which catalyzes the formation of peptide bonds, thereby polymerizing the amino acids delivered by tRNAs into a polypeptide chain. The nascent polypeptides leave the ribosome through a tunnel in the LSU and interact with protein factors that function in enzymatic processing, targeting, and the membrane insertion of nascent chains at the exit of the ribosomal tunnel. In Chaetomium thermophilum (strain DSM 1495 / CBS 144.50 / IMI 039719) (Thermochaetoides thermophila), this protein is Large ribosomal subunit protein uL18.